The chain runs to 435 residues: Protein lin-54 (435 aa).

Positions 73-136 are disordered; that stretch reads DEPIDTSSHR…PASLPRTVQP (64 aa). The segment covering 102–120 has biased composition (polar residues); sequence TPGSSQYTVRNLSNLSGSP. The CRC domain maps to 173–288; it reads QRKPCNCTKS…KCKGCQNTET (116 aa). Positions 175–188 are DNA-binding; it reads KPCNCTKSQCLKLY. Zn(2+) contacts are provided by C177, C179, C184, C189, C191, C198, C201, C203, and C206. The interval 235–250 is linker; that stretch reads IGIARGGITDIERLHQ. Residues C253, C255, C260, C265, C267, C274, C278, C280, and C283 each coordinate Zn(2+). The interval 253–266 is DNA-binding; the sequence is CHCKKSGCLKNYCE. The disordered stretch occupies residues 415–435; that stretch reads LTQDLDAAPTDDIPGPSTSTS.

It belongs to the lin-54 family. As to quaternary structure, component of the DRM complex, at least composed of lin-9, lin-35, lin-37, lin-52, lin-53, lin-54- dpl-1 and efl-1.

It localises to the nucleus. The protein localises to the chromosome. Functionally, synthetic multivulva class B (synMuvB) protein. SynMuvB proteins are required to repress the induction of vulval development by Ras signaling and probably act by forming the multiprotein DRM complex that repress transcription. In Caenorhabditis elegans, this protein is Protein lin-54.